Here is a 790-residue protein sequence, read N- to C-terminus: B3 domain-containing transcription repressor VAL1 (790 aa).

The tract at residues K234–E260 is disordered. Positions F295 to A396 form a DNA-binding region, TF-B3. 2 disordered regions span residues D400–G429 and N446–R468. Polar residues predominate over residues G405–G429. A CW-type zinc finger spans residues S538–K588. Positions 547, 550, 568, and 580 each coordinate Zn(2+). Residues L685–S732 adopt a coiled-coil conformation. The tract at residues R689–K737 is disordered. Residues L694–N724 are compositionally biased toward basic and acidic residues.

As to quaternary structure, interacts with SNL1. In terms of tissue distribution, expressed in flowers and at lower levels in roots, stems and leaves.

The protein localises to the nucleus. Transcriptional repressor of gene expression involved in embryonic pathways, such as LEC1, ABI3, and FUS3. Repressor of the sugar-inducible genes involved in the seed maturation program in seedlings. Plays an essential role in regulating the transition from seed maturation to seedling growth. Functionally redundant with VAL2/HSL1. This Arabidopsis thaliana (Mouse-ear cress) protein is B3 domain-containing transcription repressor VAL1 (VAL1).